The primary structure comprises 560 residues: Potassium-transporting ATPase potassium-binding subunit (560 aa).

Transmembrane regions (helical) follow at residues 11 to 31 (IFLLLIVIAVPLGKYLYVAFF), 63 to 83 (SYCTALLIVNAALLGISYGLL), 134 to 154 (FVTMMMFTSAATGLTVATALI), 179 to 199 (LLPLSVIVTILLVAFGVPQTF), 254 to 274 (VIEMLSMWCIPAALPFTYGHA), 282 to 302 (WVLFATMFVLFVMMLGVVYNA), 329 to 349 (FGIPLSSLFTAITTAATTGSV), 356 to 376 (LTPIGGLVPLALMMLNNVFGG), 379 to 399 (VGFVNIMMYAMIAVFLSGLMV), 417 to 437 (LIVIALLLHPLIILAPSAIAL), 488 to 508 (VVMLLGRYVSIIAMLAVAGSL), and 530 to 550 (VILFGTVFIIGALTFFPVLIL).

This sequence belongs to the KdpA family. As to quaternary structure, the system is composed of three essential subunits: KdpA, KdpB and KdpC.

The protein resides in the cell membrane. Part of the high-affinity ATP-driven potassium transport (or Kdp) system, which catalyzes the hydrolysis of ATP coupled with the electrogenic transport of potassium into the cytoplasm. This subunit binds the extracellular potassium ions and delivers the ions to the membrane domain of KdpB through an intramembrane tunnel. The chain is Potassium-transporting ATPase potassium-binding subunit from Geobacillus kaustophilus (strain HTA426).